Consider the following 449-residue polypeptide: MNPNQKIITIGSVSLTIATVCFLMQIAILATNVTLHFRQNERSIPAYNQTTPCKPIIIERNIKYRNWSKPQCQITGFAPFSKDNSIRLSAGGGIWVTREPYVSCDPSKCYQFALGQGTTLDNNHSNGTIHDRTPHRTLLMNELGVPFHLGTRQVCIAWSSSSCHDGKAWLHVCVTGDDRNATASFIYNGMLVDSIGSWSQNILRTQESECVCINGTCTVVMTDGSASGKADIRILFIREGKIVHISPLSGSAQHIEECSCYPRYPNVRCVCRDNWKGSNRPVIDINMADYSIDSSYVCSGLVGDTPRNDDSSSSSNCRDPNNERGNPGVKGWAFDIGDDVWMGRTISKDSRSGYETFRVIGGWATANSKSQTNRQVIVDNNNWSGYSGIFSVESKSCINRCFYVELIRGRPQETRVWWTSNSIVVFCGTSGTYGTGSWPDGANINFMPL.

Residues 1 to 6 (MNPNQK) lie on the Intravirion side of the membrane. Residues 7 to 29 (IITIGSVSLTIATVCFLMQIAIL) form a helical membrane-spanning segment. Positions 11–33 (GSVSLTIATVCFLMQIAILATNV) are involved in apical transport and lipid raft association. The Virion surface segment spans residues 30 to 449 (ATNVTLHFRQ…DGANINFMPL (420 aa)). N-linked (GlcNAc...) asparagine; by host glycosylation is found at Asn-32, Asn-48, and Asn-66. Residues 36–68 (HFRQNERSIPAYNQTTPCKPIIIERNIKYRNWS) form a hypervariable stalk region region. A head of neuraminidase region spans residues 71 to 449 (QCQITGFAPF…DGANINFMPL (379 aa)). 8 disulfides stabilise this stretch: Cys-72/Cys-397, Cys-104/Cys-109, Cys-163/Cys-210, Cys-212/Cys-217, Cys-258/Cys-271, Cys-260/Cys-269, Cys-298/Cys-317, and Cys-401/Cys-427. Substrate is bound at residue Arg-98. Residues Asn-123 and Asn-126 are each glycosylated (N-linked (GlcNAc...) asparagine; by host). The active-site Proton donor/acceptor is Asp-131. Arg-132 is a substrate binding site. N-linked (GlcNAc...) asparagine; by host glycosylation is found at Asn-180 and Asn-214. Position 256-257 (256-257 (EE)) interacts with substrate. Residue Arg-272 participates in substrate binding. Ca(2+) is bound by residues Asp-273, Gly-277, and Asp-304. Residues 305-330 (TPRNDDSSSSSNCRDPNNERGNPGVK) are disordered. Arg-351 is a substrate binding site. Residue Asn-382 is glycosylated (N-linked (GlcNAc...) asparagine; by host). Catalysis depends on Tyr-386, which acts as the Nucleophile.

The protein belongs to the glycosyl hydrolase 34 family. Homotetramer. The cofactor is Ca(2+). N-glycosylated.

Its subcellular location is the virion membrane. The protein localises to the host apical cell membrane. The enzyme catalyses Hydrolysis of alpha-(2-&gt;3)-, alpha-(2-&gt;6)-, alpha-(2-&gt;8)- glycosidic linkages of terminal sialic acid residues in oligosaccharides, glycoproteins, glycolipids, colominic acid and synthetic substrates.. Its activity is regulated as follows. Inhibited by the neuraminidase inhibitors zanamivir (Relenza) and oseltamivir (Tamiflu). These drugs interfere with the release of progeny virus from infected cells and are effective against all influenza strains. Resistance to neuraminidase inhibitors is quite rare. In terms of biological role, catalyzes the removal of terminal sialic acid residues from viral and cellular glycoconjugates. Cleaves off the terminal sialic acids on the glycosylated HA during virus budding to facilitate virus release. Additionally helps virus spread through the circulation by further removing sialic acids from the cell surface. These cleavages prevent self-aggregation and ensure the efficient spread of the progeny virus from cell to cell. Otherwise, infection would be limited to one round of replication. Described as a receptor-destroying enzyme because it cleaves a terminal sialic acid from the cellular receptors. May facilitate viral invasion of the upper airways by cleaving the sialic acid moieties on the mucin of the airway epithelial cells. Likely to plays a role in the budding process through its association with lipid rafts during intracellular transport. May additionally display a raft-association independent effect on budding. Plays a role in the determination of host range restriction on replication and virulence. Sialidase activity in late endosome/lysosome traffic seems to enhance virus replication. The protein is Neuraminidase of Aves.